The sequence spans 346 residues: Dihydroorotase (346 aa).

Zn(2+)-binding residues include histidine 17 and histidine 19. Residues 19–21 (HLR) and asparagine 45 each bind substrate. Lysine 103, histidine 140, and histidine 178 together coordinate Zn(2+). Lysine 103 carries the post-translational modification N6-carboxylysine. Histidine 140 serves as a coordination point for substrate. Leucine 223 is a substrate binding site. Zn(2+) is bound at residue aspartate 251. The active site involves aspartate 251. 2 residues coordinate substrate: histidine 255 and alanine 267.

Belongs to the metallo-dependent hydrolases superfamily. DHOase family. Class II DHOase subfamily. As to quaternary structure, homodimer. The cofactor is Zn(2+).

The enzyme catalyses (S)-dihydroorotate + H2O = N-carbamoyl-L-aspartate + H(+). It participates in pyrimidine metabolism; UMP biosynthesis via de novo pathway; (S)-dihydroorotate from bicarbonate: step 3/3. In terms of biological role, catalyzes the reversible cyclization of carbamoyl aspartate to dihydroorotate. The chain is Dihydroorotase from Synechococcus sp. (strain RCC307).